Reading from the N-terminus, the 123-residue chain is Small ribosomal subunit protein uS12cz/uS12cy (123 aa).

It belongs to the universal ribosomal protein uS12 family. As to quaternary structure, part of the 30S ribosomal subunit.

Its subcellular location is the plastid. The protein localises to the chloroplast. Its function is as follows. With S4 and S5 plays an important role in translational accuracy. Located at the interface of the 30S and 50S subunits. This chain is Small ribosomal subunit protein uS12cz/uS12cy (rps12-A), found in Atropa belladonna (Belladonna).